Consider the following 423-residue polypeptide: Glutamyl-tRNA(Gln) amidotransferase subunit A (423 aa).

Residues Lys28 and Ser103 each act as charge relay system in the active site. Ser127 (acyl-ester intermediate) is an active-site residue.

This sequence belongs to the amidase family. GatA subfamily. Heterotrimer of A, B and C subunits.

The catalysed reaction is L-glutamyl-tRNA(Gln) + L-glutamine + ATP + H2O = L-glutaminyl-tRNA(Gln) + L-glutamate + ADP + phosphate + H(+). In terms of biological role, allows the formation of correctly charged Gln-tRNA(Gln) through the transamidation of misacylated Glu-tRNA(Gln) in organisms which lack glutaminyl-tRNA synthetase. The reaction takes place in the presence of glutamine and ATP through an activated gamma-phospho-Glu-tRNA(Gln). This is Glutamyl-tRNA(Gln) amidotransferase subunit A from Halobacterium salinarum (strain ATCC 700922 / JCM 11081 / NRC-1) (Halobacterium halobium).